Consider the following 175-residue polypeptide: Early E1A protein (175 aa).

An interaction with RB1 in competition with E2F1 region spans residues 40-48 (PSLHDLFDL). The LXCXE motif, interaction with host RB1 motif lies at 106–110 (LLCLE). A zinc finger lies at 146 to 164 (CLRCAYYQEQGENSICGLC).

It belongs to the adenoviridae E1A protein family. Interacts with host UBE2I; this interaction interferes with polySUMOylation. Interacts with host RB1; this interaction induces the aberrant dissociation of RB1-E2F1 complex thereby disrupting the activity of RB1 and activating E2F1-regulated genes. Interacts with host ATF7; the interaction enhances ATF7-mediated viral transactivation activity which requires the zinc binding domains of both proteins. Isoform early E1A 32 kDa protein and isoform early E1A 26 kDa protein interact (via N-terminus) with CUL1 and E3 ubiquitin ligase RBX1; these interactions inhibit RBX1-CUL1-dependent elongation reaction of ubiquitin chains and attenuate ubiquitination of SCF(FBXW7) target proteins. Interacts (via PXLXP motif) with host ZMYND11/BS69 (via MYND-type zinc finger); this interaction inhibits E1A mediated transactivation. Interacts with host EP300; this interaction stimulates the acetylation of RB1 by recruiting EP300 and RB1 into a multimeric-protein complex. Interacts with host CTBP1 and CTBP2; this interaction seems to potentiate viral replication. Interacts with host DCAF7. Interacts with host DYRK1A. Interacts with host KPNA4; this interaction allows E1A import into the host nucleus. Interacts with host EP400; this interaction stabilizes MYC. Interacts with host TBP protein; this interaction probably disrupts the TBP-TATA complex.

It localises to the host nucleus. Plays a role in viral genome replication by driving entry of quiescent cells into the cell cycle. Stimulation of progression from G1 to S phase allows the virus to efficiently use the cellular DNA replicating machinery to achieve viral genome replication. E1A protein has both transforming and trans-activating activities. Induces the disassembly of the E2F1 transcription factor from RB1 by direct competition for the same binding site on RB1, with subsequent transcriptional activation of E2F1-regulated S-phase genes and of the E2 region of the adenoviral genome. Release of E2F1 leads to the ARF-mediated inhibition of MDM2 and causes TP53/p53 to accumulate because it is not targeted for degradation by MDM2-mediated ubiquitination anymore. This increase in TP53, in turn, would arrest the cell proliferation and direct its death but this effect is counteracted by the viral protein E1B-55K. Inactivation of the ability of RB1 to arrest the cell cycle is critical for cellular transformation, uncontrolled cellular growth and proliferation induced by viral infection. Interaction with RBX1 and CUL1 inhibits ubiquitination of the proteins targeted by SCF(FBXW7) ubiquitin ligase complex, and may be linked to unregulated host cell proliferation. The tumorigenesis-restraining activity of E1A may be related to the disruption of the host CtBP-CtIP complex through the CtBP binding motif. This Canis lupus familiaris (Dog) protein is Early E1A protein.